The primary structure comprises 270 residues: Aquaporin-11 (270 aa).

The next 2 helical transmembrane spans lie at 5–25 (IMTM…ISIC) and 59–79 (FELG…GLFF). The NPA 1 signature appears at 94-96 (DPS). Residues 120-140 (IMGAAVSYRFAKIFWSFGLMA) form a helical membrane-spanning segment. The N-linked (GlcNAc...) asparagine glycan is linked to asparagine 148. 2 helical membrane passes run 153–173 (ASLQ…TIVN) and 184–204 (MLIS…VSGG). The NPA 2 motif lies at 207–209 (NPT). Residues 220–240 (GLSGPSFFLVYWFGPILGSSI) form a helical membrane-spanning segment.

It belongs to the MIP/aquaporin (TC 1.A.8) family.

The protein resides in the membrane. The catalysed reaction is H2O(in) = H2O(out). Its function is as follows. Probable intracellular unorthodox aquaporin that may modulate the water content and osmolytes during anhydrobiosis. This chain is Aquaporin-11, found in Milnesium tardigradum (Water bear).